A 410-amino-acid polypeptide reads, in one-letter code: Scarecrow-like protein 32 (410 aa).

In terms of domain architecture, GRAS spans 18-408; sequence LRGCGDANFM…HSVVFATVWV (391 aa). The tract at residues 25-88 is leucine repeat I (LRI); the sequence is NFMEQLLLHC…AVSKTPTLSS (64 aa). The VHIID stretch occupies residues 107-188; sequence LAAFVDLTPW…HFPPFINISY (82 aa). The short motif at 138–142 is the VHIID element; the sequence is VHIVD. Positions 190-227 are leucine repeat II (LRII); it reads ELGSKLVNFATTRNITMEFTIVPSTYSDGFSSLLQQLR. The PFYRE stretch occupies residues 237 to 329; it reads LVVNCHMMLR…EAEISWKIEN (93 aa). The segment at 332–408 is SAW; sequence AKEGAERVER…HSVVFATVWV (77 aa).

It belongs to the GRAS family. Expressed in seedlings, leaves and flowers.

Its subcellular location is the nucleus. Its function is as follows. Probable transcription factor involved in plant development. This chain is Scarecrow-like protein 32 (SCL32), found in Arabidopsis thaliana (Mouse-ear cress).